An 808-amino-acid chain; its full sequence is DNA gyrase subunit B (808 aa).

Residues 429-544 (SELFIVEGDS…KGYLYIAQPP (116 aa)) form the Toprim domain. Mg(2+) contacts are provided by Glu-435, Asp-509, and Asp-511.

It belongs to the type II topoisomerase GyrB family. In terms of assembly, heterotetramer, composed of two GyrA and two GyrB chains. In the heterotetramer, GyrA contains the active site tyrosine that forms a transient covalent intermediate with DNA, while GyrB binds cofactors and catalyzes ATP hydrolysis. Requires Mg(2+) as cofactor. It depends on Mn(2+) as a cofactor. The cofactor is Ca(2+).

The protein resides in the cytoplasm. It catalyses the reaction ATP-dependent breakage, passage and rejoining of double-stranded DNA.. A type II topoisomerase that negatively supercoils closed circular double-stranded (ds) DNA in an ATP-dependent manner to modulate DNA topology and maintain chromosomes in an underwound state. Negative supercoiling favors strand separation, and DNA replication, transcription, recombination and repair, all of which involve strand separation. Also able to catalyze the interconversion of other topological isomers of dsDNA rings, including catenanes and knotted rings. Type II topoisomerases break and join 2 DNA strands simultaneously in an ATP-dependent manner. This chain is DNA gyrase subunit B, found in Rickettsia bellii (strain RML369-C).